The sequence spans 583 residues: Aspartate--tRNA ligase (583 aa).

Glu174 is an L-aspartate binding site. The tract at residues 198–201 (QITK) is aspartate. Position 220 (Arg220) interacts with L-aspartate. Residues 220–222 (RDE) and Gln229 each bind ATP. His443 serves as a coordination point for L-aspartate. Glu477 provides a ligand contact to ATP. Arg484 serves as a coordination point for L-aspartate. 529–532 (GLDR) is a binding site for ATP.

Belongs to the class-II aminoacyl-tRNA synthetase family. Type 1 subfamily. As to quaternary structure, homodimer.

It localises to the cytoplasm. The enzyme catalyses tRNA(Asp) + L-aspartate + ATP = L-aspartyl-tRNA(Asp) + AMP + diphosphate. Its function is as follows. Catalyzes the attachment of L-aspartate to tRNA(Asp) in a two-step reaction: L-aspartate is first activated by ATP to form Asp-AMP and then transferred to the acceptor end of tRNA(Asp). In Streptococcus thermophilus (strain ATCC BAA-491 / LMD-9), this protein is Aspartate--tRNA ligase.